Consider the following 367-residue polypeptide: Queuine tRNA-ribosyltransferase (367 aa).

D92 (proton acceptor) is an active-site residue. Residues D92 to F96, D146, Q188, and G215 each bind substrate. Positions G246–D252 are RNA binding. D265 (nucleophile) is an active-site residue. Residues C303, C305, C308, and H334 each coordinate Zn(2+).

The protein belongs to the queuine tRNA-ribosyltransferase family. Homodimer. Within each dimer, one monomer is responsible for RNA recognition and catalysis, while the other monomer binds to the replacement base PreQ1. Zn(2+) serves as cofactor.

The catalysed reaction is 7-aminomethyl-7-carbaguanine + guanosine(34) in tRNA = 7-aminomethyl-7-carbaguanosine(34) in tRNA + guanine. The protein operates within tRNA modification; tRNA-queuosine biosynthesis. In terms of biological role, catalyzes the base-exchange of a guanine (G) residue with the queuine precursor 7-aminomethyl-7-deazaguanine (PreQ1) at position 34 (anticodon wobble position) in tRNAs with GU(N) anticodons (tRNA-Asp, -Asn, -His and -Tyr). Catalysis occurs through a double-displacement mechanism. The nucleophile active site attacks the C1' of nucleotide 34 to detach the guanine base from the RNA, forming a covalent enzyme-RNA intermediate. The proton acceptor active site deprotonates the incoming PreQ1, allowing a nucleophilic attack on the C1' of the ribose to form the product. After dissociation, two additional enzymatic reactions on the tRNA convert PreQ1 to queuine (Q), resulting in the hypermodified nucleoside queuosine (7-(((4,5-cis-dihydroxy-2-cyclopenten-1-yl)amino)methyl)-7-deazaguanosine). This Francisella tularensis subsp. mediasiatica (strain FSC147) protein is Queuine tRNA-ribosyltransferase.